The following is a 1358-amino-acid chain: DNA-directed RNA polymerase subunit beta (1358 aa).

This sequence belongs to the RNA polymerase beta chain family. As to quaternary structure, the RNAP catalytic core consists of 2 alpha, 1 beta, 1 beta' and 1 omega subunit. When a sigma factor is associated with the core the holoenzyme is formed, which can initiate transcription.

The enzyme catalyses RNA(n) + a ribonucleoside 5'-triphosphate = RNA(n+1) + diphosphate. DNA-dependent RNA polymerase catalyzes the transcription of DNA into RNA using the four ribonucleoside triphosphates as substrates. The chain is DNA-directed RNA polymerase subunit beta from Chromohalobacter salexigens (strain ATCC BAA-138 / DSM 3043 / CIP 106854 / NCIMB 13768 / 1H11).